A 75-amino-acid chain; its full sequence is uncharacterized protein (75 aa).

A compositionally biased stretch (low complexity) spans 1–14 (MNDNNDNNNNNKNI). The tract at residues 1 to 30 (MNDNNDNNNNNKNIDNVDDDNDDNDKGKYK) is disordered.

This is an uncharacterized protein from Dictyostelium discoideum (Social amoeba).